A 1080-amino-acid chain; its full sequence is Isoleucine--tRNA ligase (1080 aa).

Residues 48-58 carry the 'HIGH' region motif; sequence PYASGSIHLGT. Residues 628–632 carry the 'KMSKS' region motif; sequence KMSKS. Residue lysine 631 participates in ATP binding.

It belongs to the class-I aminoacyl-tRNA synthetase family. IleS type 2 subfamily. Monomer. It depends on Zn(2+) as a cofactor.

It localises to the cytoplasm. It carries out the reaction tRNA(Ile) + L-isoleucine + ATP = L-isoleucyl-tRNA(Ile) + AMP + diphosphate. In terms of biological role, catalyzes the attachment of isoleucine to tRNA(Ile). As IleRS can inadvertently accommodate and process structurally similar amino acids such as valine, to avoid such errors it has two additional distinct tRNA(Ile)-dependent editing activities. One activity is designated as 'pretransfer' editing and involves the hydrolysis of activated Val-AMP. The other activity is designated 'posttransfer' editing and involves deacylation of mischarged Val-tRNA(Ile). This chain is Isoleucine--tRNA ligase, found in Methanopyrus kandleri (strain AV19 / DSM 6324 / JCM 9639 / NBRC 100938).